A 237-amino-acid chain; its full sequence is Phosphoribosylaminoimidazole-succinocarboxamide synthase (237 aa).

It belongs to the SAICAR synthetase family.

The enzyme catalyses 5-amino-1-(5-phospho-D-ribosyl)imidazole-4-carboxylate + L-aspartate + ATP = (2S)-2-[5-amino-1-(5-phospho-beta-D-ribosyl)imidazole-4-carboxamido]succinate + ADP + phosphate + 2 H(+). It participates in purine metabolism; IMP biosynthesis via de novo pathway; 5-amino-1-(5-phospho-D-ribosyl)imidazole-4-carboxamide from 5-amino-1-(5-phospho-D-ribosyl)imidazole-4-carboxylate: step 1/2. This Enterobacter sp. (strain 638) protein is Phosphoribosylaminoimidazole-succinocarboxamide synthase.